Consider the following 555-residue polypeptide: Hydroxylamine reductase (555 aa).

[4Fe-4S] cluster is bound by residues C5, C8, C17, and C23. Residues H248, E272, C316, C408, C436, C461, E496, and K498 each contribute to the hybrid [4Fe-2O-2S] cluster site. At C408 the chain carries Cysteine persulfide.

It belongs to the HCP family. It depends on [4Fe-4S] cluster as a cofactor. Requires hybrid [4Fe-2O-2S] cluster as cofactor.

The protein localises to the cytoplasm. The catalysed reaction is A + NH4(+) + H2O = hydroxylamine + AH2 + H(+). Functionally, catalyzes the reduction of hydroxylamine to form NH(3) and H(2)O. The sequence is that of Hydroxylamine reductase from Halothermothrix orenii (strain H 168 / OCM 544 / DSM 9562).